Reading from the N-terminus, the 540-residue chain is 2-isopropylmalate synthase (540 aa).

The 262-residue stretch at Val-8–Glu-269 folds into the Pyruvate carboxyltransferase domain. Asp-17, His-208, His-210, and Asn-244 together coordinate Mn(2+). Residues Gln-408–Leu-540 are regulatory domain.

It belongs to the alpha-IPM synthase/homocitrate synthase family. LeuA type 1 subfamily. Homodimer. It depends on Mn(2+) as a cofactor.

It localises to the cytoplasm. It catalyses the reaction 3-methyl-2-oxobutanoate + acetyl-CoA + H2O = (2S)-2-isopropylmalate + CoA + H(+). The protein operates within amino-acid biosynthesis; L-leucine biosynthesis; L-leucine from 3-methyl-2-oxobutanoate: step 1/4. Functionally, catalyzes the condensation of the acetyl group of acetyl-CoA with 3-methyl-2-oxobutanoate (2-ketoisovalerate) to form 3-carboxy-3-hydroxy-4-methylpentanoate (2-isopropylmalate). This chain is 2-isopropylmalate synthase, found in Synechococcus sp. (strain WH7803).